Here is a 528-residue protein sequence, read N- to C-terminus: Bifunctional pantoate ligase/cytidylate kinase (528 aa).

Residues 1–293 (MRLFTTIAGL…IGSCRLIDNI (293 aa)) are pantoate--beta-alanine ligase. 34-41 (MGALHKGH) is an ATP binding site. The active-site Proton donor is H41. Residue Q65 coordinates (R)-pantoate. Q65 serves as a coordination point for beta-alanine. 160–163 (GQKD) contributes to the ATP binding site. A (R)-pantoate-binding site is contributed by Q166. Residues I189 and 197 to 200 (ISSR) contribute to the ATP site. Residues 294–528 (LLRNRKPIIA…YGKSSVNNII (235 aa)) form a cytidylate kinase region.

It in the N-terminal section; belongs to the pantothenate synthetase family. This sequence in the C-terminal section; belongs to the cytidylate kinase family. Type 1 subfamily.

The protein localises to the cytoplasm. The catalysed reaction is (R)-pantoate + beta-alanine + ATP = (R)-pantothenate + AMP + diphosphate + H(+). It catalyses the reaction CMP + ATP = CDP + ADP. The enzyme catalyses dCMP + ATP = dCDP + ADP. The protein operates within cofactor biosynthesis; (R)-pantothenate biosynthesis; (R)-pantothenate from (R)-pantoate and beta-alanine: step 1/1. Functionally, catalyzes the condensation of pantoate with beta-alanine in an ATP-dependent reaction via a pantoyl-adenylate intermediate. In terms of biological role, catalyzes the transfer of a phosphate group from ATP to either CMP or dCMP to form CDP or dCDP and ADP, respectively. The protein is Bifunctional pantoate ligase/cytidylate kinase of Trichodesmium erythraeum (strain IMS101).